We begin with the raw amino-acid sequence, 389 residues long: Chalcone synthase (389 aa).

Cysteine 164 is an active-site residue.

The protein belongs to the thiolase-like superfamily. Chalcone/stilbene synthases family.

It carries out the reaction (E)-4-coumaroyl-CoA + 3 malonyl-CoA + 3 H(+) = 2',4,4',6'-tetrahydroxychalcone + 3 CO2 + 4 CoA. It participates in secondary metabolite biosynthesis; flavonoid biosynthesis. In terms of biological role, the primary product of this enzyme is 4,2',4',6'-tetrahydroxychalcone (also termed naringenin-chalcone or chalcone) which can under specific conditions spontaneously isomerize into naringenin. The sequence is that of Chalcone synthase (CHS) from Catharanthus roseus (Madagascar periwinkle).